We begin with the raw amino-acid sequence, 434 residues long: Trigger factor (434 aa).

The region spanning 160–245 (GDKAKINFVG…LNEVQAANLP (86 aa)) is the PPIase FKBP-type domain.

The protein belongs to the FKBP-type PPIase family. Tig subfamily.

The protein resides in the cytoplasm. The enzyme catalyses [protein]-peptidylproline (omega=180) = [protein]-peptidylproline (omega=0). In terms of biological role, involved in protein export. Acts as a chaperone by maintaining the newly synthesized protein in an open conformation. Functions as a peptidyl-prolyl cis-trans isomerase. This Shewanella halifaxensis (strain HAW-EB4) protein is Trigger factor.